The chain runs to 262 residues: Indole-3-glycerol phosphate synthase (262 aa).

The protein belongs to the TrpC family.

It carries out the reaction 1-(2-carboxyphenylamino)-1-deoxy-D-ribulose 5-phosphate + H(+) = (1S,2R)-1-C-(indol-3-yl)glycerol 3-phosphate + CO2 + H2O. Its pathway is amino-acid biosynthesis; L-tryptophan biosynthesis; L-tryptophan from chorismate: step 4/5. The chain is Indole-3-glycerol phosphate synthase from Bordetella pertussis (strain Tohama I / ATCC BAA-589 / NCTC 13251).